Here is a 202-residue protein sequence, read N- to C-terminus: Kunitz trypsin inhibitor 7 (202 aa).

The first 25 residues, 1–25, serve as a signal peptide directing secretion; it reads MKTFRSMLISLLLVAITTTSGVVEG. Cys-69 and Cys-115 form a disulfide bridge. N-linked (GlcNAc...) asparagine glycosylation is found at Asn-93, Asn-136, Asn-144, and Asn-198.

The protein belongs to the protease inhibitor I3 (leguminous Kunitz-type inhibitor) family.

In terms of biological role, exhibits Kunitz trypsin protease inhibitor activity. The chain is Kunitz trypsin inhibitor 7 from Arabidopsis thaliana (Mouse-ear cress).